Reading from the N-terminus, the 395-residue chain is DNA primase small subunit PriS (395 aa).

Residues D95, D97, and D302 contribute to the active site.

It belongs to the eukaryotic-type primase small subunit family. In terms of assembly, heterodimer of a small subunit (PriS) and a large subunit (PriL). Mg(2+) is required as a cofactor. It depends on Mn(2+) as a cofactor.

Its function is as follows. Catalytic subunit of DNA primase, an RNA polymerase that catalyzes the synthesis of short RNA molecules used as primers for DNA polymerase during DNA replication. The small subunit contains the primase catalytic core and has DNA synthesis activity on its own. Binding to the large subunit stabilizes and modulates the activity, increasing the rate of DNA synthesis while decreasing the length of the DNA fragments, and conferring RNA synthesis capability. The DNA polymerase activity may enable DNA primase to also catalyze primer extension after primer synthesis. May also play a role in DNA repair. The sequence is that of DNA primase small subunit PriS from Methanothrix thermoacetophila (strain DSM 6194 / JCM 14653 / NBRC 101360 / PT) (Methanosaeta thermophila).